A 202-amino-acid chain; its full sequence is FMN-dependent NADH:quinone oxidoreductase (202 aa).

FMN is bound by residues serine 12 and 21–23 (SFS).

It belongs to the azoreductase type 1 family. In terms of assembly, homodimer. FMN serves as cofactor.

It catalyses the reaction 2 a quinone + NADH + H(+) = 2 a 1,4-benzosemiquinone + NAD(+). The enzyme catalyses N,N-dimethyl-1,4-phenylenediamine + anthranilate + 2 NAD(+) = 2-(4-dimethylaminophenyl)diazenylbenzoate + 2 NADH + 2 H(+). Quinone reductase that provides resistance to thiol-specific stress caused by electrophilic quinones. Its function is as follows. Also exhibits azoreductase activity. Catalyzes the reductive cleavage of the azo bond in aromatic azo compounds to the corresponding amines. In Mycoplasma mobile (strain ATCC 43663 / 163K / NCTC 11711) (Mesomycoplasma mobile), this protein is FMN-dependent NADH:quinone oxidoreductase.